Consider the following 469-residue polypeptide: MQRGIVWVVDDDSSIRWVLERALAGAGLTCTTFENGNEVLAALASKTPDVLLSDIRMPGMDGLALLKQIKQRHPMLPVIIMTAHSDLDAAVSAYQQGAFDYLPKPFDIDEAVALVERAISHYQEQQQPRNIEVNGPTTDMIGEAPAMQDVFRIIGRLSRSSISVLINGESGTGKELVAHALHRHSPRAKAPFIALNMAAIPKDLIESELFGHEKGAFTGANTIRQGRFEQADGGTLFLDEIGDMPLDVQTRLLRVLADGQFYRVGGYAPVKVDVRIIAATHQNLERRVQEGKFREDLFHRLNVIRIHLPPLRERREDIPRLARHFLQVAARELGVEAKLLHPETETALTRLAWPGNVRQLENTCRWLTVMAAGQEVLIQDLPGELFEASTPDSPSHLPPDSWATLLAQWADRALRSGHQNLLSEAQPELERTLLTTALRHTQGHKQEAARLLGWGRNTLTRKLKELGME.

Positions 5–119 constitute a Response regulatory domain; sequence IVWVVDDDSS…EAVALVERAI (115 aa). At Asp54 the chain carries 4-aspartylphosphate. The Sigma-54 factor interaction domain maps to 140 to 369; the sequence is MIGEAPAMQD…LENTCRWLTV (230 aa). ATP contacts are provided by residues 168–175 and 231–240; these read GESGTGKE and ADGGTLFLDE. Residues 445–464 constitute a DNA-binding region (H-T-H motif); sequence KQEAARLLGWGRNTLTRKLK.

Post-translationally, phosphorylated and dephosphorylated by NtrB.

The protein resides in the cytoplasm. Functionally, member of the two-component regulatory system NtrB/NtrC, which controls expression of the nitrogen-regulated (ntr) genes in response to nitrogen limitation. Phosphorylated NtrC binds directly to DNA and stimulates the formation of open promoter-sigma54-RNA polymerase complexes. This Salmonella typhimurium (strain LT2 / SGSC1412 / ATCC 700720) protein is DNA-binding transcriptional regulator NtrC (glnG).